A 226-amino-acid polypeptide reads, in one-letter code: ATP-dependent dethiobiotin synthetase BioD (226 aa).

Residue 12–17 (EVGKTV) participates in ATP binding. Thr-16 contributes to the Mg(2+) binding site. The active site involves Lys-39. A substrate-binding site is contributed by Thr-43. ATP is bound by residues Asp-47, 108–111 (EALG), 168–169 (NC), and 200–202 (PYI). Asp-47 and Glu-108 together coordinate Mg(2+).

This sequence belongs to the dethiobiotin synthetase family. In terms of assembly, homodimer. Mg(2+) is required as a cofactor.

Its subcellular location is the cytoplasm. It carries out the reaction (7R,8S)-7,8-diammoniononanoate + CO2 + ATP = (4R,5S)-dethiobiotin + ADP + phosphate + 3 H(+). It catalyses the reaction (7R,8S)-8-amino-7-(carboxyamino)nonanoate + ATP = (4R,5S)-dethiobiotin + ADP + phosphate + H(+). It functions in the pathway cofactor biosynthesis; biotin biosynthesis; biotin from 7,8-diaminononanoate: step 1/2. Its function is as follows. Catalyzes a mechanistically unusual reaction, the ATP-dependent insertion of CO2 between the N7 and N8 nitrogen atoms of 7,8-diaminopelargonic acid (DAPA, also called 7,8-diammoniononanoate) to form a ureido ring. This cyanobacterium does not encode bioA (which catalyzes the formation of the precursor for this reaction in the cannonical pathway), instead it encodes bioU, which replaces bioA and also performs the first half of the cannonical BioD reaction. Thus in this organism BioD has a different substrate. The protein is ATP-dependent dethiobiotin synthetase BioD of Gloeothece citriformis (strain PCC 7424) (Cyanothece sp. (strain PCC 7424)).